A 768-amino-acid polypeptide reads, in one-letter code: Solute carrier family 45 member 4 (768 aa).

A disordered region spans residues 1–32 (MKMAPQNADPESMQVQELSVPLPDPQKAGGAE). 6 consecutive transmembrane segments (helical) span residues 63–83 (EFCY…IGLP), 86–106 (YYSL…PLIG), 123–143 (ILAL…GSAI), 155–175 (PIGI…ADAT), 196–216 (LNIH…LGGL), and 233–253 (VLFF…LFSI). 2 disordered regions span residues 259-284 (SPQQ…PAFP) and 379-419 (NEAK…RHAF). Phosphoserine is present on residues S424 and S454. Positions 460–489 (DMQKRQRQHRHRNQSGATTSSGDTESEEGE) are disordered. A compositionally biased stretch (low complexity) spans 473 to 482 (QSGATTSSGD). S485 carries the post-translational modification Phosphoserine. A run of 6 helical transmembrane segments spans residues 518–538 (TWFS…QVIF), 560–580 (MGCW…ALLQ), 592–612 (VIYV…AMFP), 614–634 (VYVA…ISYC), 666–686 (ILSC…GGVV), and 695–715 (IPMV…FLVI). The segment at 726-768 (EQKGLSSPLAGEGRAGGNSEKPTVLKLTRKEGLQGPVETESVV) is disordered. S732 carries the phosphoserine modification.

The protein belongs to the glycoside-pentoside-hexuronide (GPH) cation symporter transporter (TC 2.A.2) family.

It localises to the membrane. It carries out the reaction sucrose(out) + H(+)(out) = sucrose(in) + H(+)(in). Its function is as follows. Proton-associated sucrose transporter. May be able to transport also glucose and fructose. The protein is Solute carrier family 45 member 4 of Homo sapiens (Human).